The sequence spans 238 residues: MRTDNRTAGQLRPVQITTGCLMTAEGSALIKVGNTHVLCAATIEDTVPPFLRNTGKGWVTAEYSMLPRATAKRTPREVTKGRPSGRTHEIQRLIGRSMRSAVDMSSFGERTLIIDCDVIQADGGTRTASITGAFVAMALAFRQLIEYRALKANPIRDYVAATSVGLVGGIPMLDLCYEEDSQADVDMNVVMTGGGKFVEVQATAEHSAFDDAQMAELTELARTGIAQLVRMQKEIIEG.

Phosphate is bound by residues Arg86 and 124 to 126 (GTR).

This sequence belongs to the RNase PH family. In terms of assembly, homohexameric ring arranged as a trimer of dimers.

It carries out the reaction tRNA(n+1) + phosphate = tRNA(n) + a ribonucleoside 5'-diphosphate. In terms of biological role, phosphorolytic 3'-5' exoribonuclease that plays an important role in tRNA 3'-end maturation. Removes nucleotide residues following the 3'-CCA terminus of tRNAs; can also add nucleotides to the ends of RNA molecules by using nucleoside diphosphates as substrates, but this may not be physiologically important. Probably plays a role in initiation of 16S rRNA degradation (leading to ribosome degradation) during starvation. In Solibacter usitatus (strain Ellin6076), this protein is Ribonuclease PH.